The chain runs to 256 residues: Tumor necrosis factor receptor superfamily member 9 (256 aa).

The first 23 residues, 1–23 (MGNNCYNVVVIVLLLVGCEKVGA), serve as a signal peptide directing secretion. 4 TNFR-Cys repeats span residues 24–45 (VQNSCDNCQPGTFCRKYNPVCK), 46–85 (SCPPSTFSSIGGQPNCNICRVCAGYFRFKKFCSSTHNAEC), 86–117 (ECIEGFHCLGPQCTRCEKDCRPGQELTKQGCK), and 118–159 (TCSL…VVCG). The Extracellular segment spans residues 24–187 (VQNSCDNCQP…GPGGHSLQVL (164 aa)). Cystine bridges form between Cys28-Cys37, Cys31-Cys44, Cys47-Cys61, Cys64-Cys77, Cys67-Cys85, Cys87-Cys93, Cys98-Cys105, Cys101-Cys116, and Cys119-Cys133. Asn128 and Asn138 each carry an N-linked (GlcNAc...) asparagine glycan. A disulfide bridge connects residues Cys139 and Cys158. A helical transmembrane segment spans residues 188-208 (TLFLALTSALLLALIFITLLF). Over 209 to 256 (SVLKWIRKKFPHIFKQPFKKTTGAAQEEDACSCRCPQEEEGGGGGYEL) the chain is Cytoplasmic.

In terms of assembly, predominantly homodimeric, but may also exist as a monomer. Associates with p56-LCK. Interacts with TRAF1, TRAF2 and TRAF3. In terms of tissue distribution, expressed in activated thymocytes, splenic T cells, CD4(+), and CD8(+) T-cells.

The protein localises to the cell membrane. Its function is as follows. Receptor for TNFSF9/4-1BBL. Conveys a signal that enhances CD8(+) T-cell survival, cytotoxicity, and mitochondrial activity, thereby promoting immunity against viruses and tumors. In Mus musculus (Mouse), this protein is Tumor necrosis factor receptor superfamily member 9 (Tnfrsf9).